Consider the following 676-residue polypeptide: Translation initiation factor IF-2, mitochondrial (676 aa).

Positions 143-326 (KRAPVVTIMG…MDIRAENSPK (184 aa)) constitute a tr-type G domain. The interval 152–159 (GHVDHGKT) is G1. 152–159 (GHVDHGKT) provides a ligand contact to GTP. The tract at residues 177–181 (GITQH) is G2. Residues 200–203 (DTPG) and 254–257 (TKID) each bind GTP. Residues 200 to 203 (DTPG) form a G3 region. The tract at residues 254-257 (TKID) is G4. The segment at 296 to 298 (SAK) is G5.

This sequence belongs to the TRAFAC class translation factor GTPase superfamily. Classic translation factor GTPase family. IF-2 subfamily.

Its subcellular location is the mitochondrion. Its function is as follows. One of the essential components for the initiation of protein synthesis. Protects formylmethionyl-tRNA from spontaneous hydrolysis and promotes its binding to the 30S ribosomal subunits. Also involved in the hydrolysis of GTP during the formation of the 70S ribosomal complex. This Saccharomyces cerevisiae (strain ATCC 204508 / S288c) (Baker's yeast) protein is Translation initiation factor IF-2, mitochondrial (IFM1).